Consider the following 500-residue polypeptide: Lysine--tRNA ligase (500 aa).

Mg(2+)-binding residues include glutamate 410 and glutamate 417.

This sequence belongs to the class-II aminoacyl-tRNA synthetase family. Homodimer. Mg(2+) serves as cofactor.

Its subcellular location is the cytoplasm. It catalyses the reaction tRNA(Lys) + L-lysine + ATP = L-lysyl-tRNA(Lys) + AMP + diphosphate. In Shewanella amazonensis (strain ATCC BAA-1098 / SB2B), this protein is Lysine--tRNA ligase.